We begin with the raw amino-acid sequence, 406 residues long: Succinylornithine transaminase (406 aa).

Lysine 252 carries the N6-(pyridoxal phosphate)lysine modification.

The protein belongs to the class-III pyridoxal-phosphate-dependent aminotransferase family. AstC subfamily. It depends on pyridoxal 5'-phosphate as a cofactor.

It carries out the reaction N(2)-succinyl-L-ornithine + 2-oxoglutarate = N-succinyl-L-glutamate 5-semialdehyde + L-glutamate. It functions in the pathway amino-acid degradation; L-arginine degradation via AST pathway; L-glutamate and succinate from L-arginine: step 3/5. Catalyzes the transamination of N(2)-succinylornithine and alpha-ketoglutarate into N(2)-succinylglutamate semialdehyde and glutamate. Can also act as an acetylornithine aminotransferase. In Escherichia coli (strain SMS-3-5 / SECEC), this protein is Succinylornithine transaminase.